The chain runs to 212 residues: Adenylate kinase (212 aa).

10-15 (GAGKGT) is a binding site for ATP. Positions 30–59 (STGDMFRAAMANQTEMGVLAKSYIDKGELV) are NMP. Residues Thr31, Arg36, 57–59 (ELV), 86–89 (GYPR), and Gln93 contribute to the AMP site. Residues 127–159 (GRIIHRQTGETFHKVFNPPANYNEEDYYQREDD) are LID. ATP is bound by residues Arg128 and 137–138 (TF). Positions 156 and 167 each coordinate AMP. Gln195 contributes to the ATP binding site.

Belongs to the adenylate kinase family. Monomer.

The protein localises to the cytoplasm. It catalyses the reaction AMP + ATP = 2 ADP. It functions in the pathway purine metabolism; AMP biosynthesis via salvage pathway; AMP from ADP: step 1/1. Catalyzes the reversible transfer of the terminal phosphate group between ATP and AMP. Plays an important role in cellular energy homeostasis and in adenine nucleotide metabolism. This is Adenylate kinase from Streptococcus gordonii (strain Challis / ATCC 35105 / BCRC 15272 / CH1 / DL1 / V288).